Here is an 81-residue protein sequence, read N- to C-terminus: Type III secretion regulatory protein ExsE (81 aa).

The disordered stretch occupies residues 55–81 (DPRSEQALQRLADGDGTPLEARTVRRR).

Interacts with ExsC.

It is found in the cytoplasm. The protein resides in the secreted. In terms of biological role, acts as a negative regulator of the type III secretion regulon (T3SS) expression. In the absence of inducing signals such as low Ca(2+) or host cell contact, the T3SS/injectisome is expressed at a low basal level and exists in a quiescent state due to ExsA sequestration by ExsD. ExsE binding to ExsC disrupts the complex between ExsC and ExsD, thereby allowing free ExsD to bind ExsA. Upon inducing signal, ExsE is secreted allowing ExsC to bind ExsD. In turn, ExsD cannot bind ExsA and prevent ExsA-mediated transcriptional activation of the type III secretion system. The sequence is that of Type III secretion regulatory protein ExsE (exsE) from Pseudomonas aeruginosa (strain ATCC 15692 / DSM 22644 / CIP 104116 / JCM 14847 / LMG 12228 / 1C / PRS 101 / PAO1).